Here is a 299-residue protein sequence, read N- to C-terminus: DNA-binding transcriptional repressor CapW (299 aa).

The interval 1–84 (MESSGSSKVR…EFKPITKRSE (84 aa)) is winged HTH domain. The segment at 85-196 (ATRYLNELQR…IGRLDVLEHV (112 aa)) is WYL domain. The 81-residue stretch at 120–200 (SRAIEADEVA…DVLEHVFSAK (81 aa)) folds into the WYL domain. The interval 145–189 (YQSMDAPEPQEWVLSPHALGFDGLRWHARAWCHARQVFRDFAIGR) is probable ligand-binding region. The segment at 197–299 (FSAKPVDPLL…DRDGLQHLRR (103 aa)) is WCX domain.

Homodimer.

Its function is as follows. Transcriptional regulator of a CBASS antivirus system. CBASS (cyclic oligonucleotide-based antiphage signaling system) provides immunity against bacteriophage. The CD-NTase protein synthesizes cyclic nucleotides in response to infection; these serve as specific second messenger signals. The signals activate a diverse range of effectors, leading to bacterial cell death and thus abortive phage infection. A type III CBASS system, part of a CapW-Cap6-Cap8-Cap7-CdnC-NucC locus. Binds specifically to palindromes that overlap the -10 site in the promoter of cap6, found beween found between the genes for divergently transcribed capW and cap6 (cognate DNA). Probably represses transcription bidirectionally from the promoter. Mutations that make it a constitutive repressor in E.coli do not change DNA-binding affinity. The chain is DNA-binding transcriptional repressor CapW from Stenotrophomonas maltophilia (Pseudomonas maltophilia).